The sequence spans 616 residues: Dihydroxy-acid dehydratase (616 aa).

Aspartate 81 contributes to the Mg(2+) binding site. Residue cysteine 122 coordinates [2Fe-2S] cluster. Aspartate 123 and lysine 124 together coordinate Mg(2+). N6-carboxylysine is present on lysine 124. Cysteine 195 is a binding site for [2Fe-2S] cluster. Glutamate 491 is a binding site for Mg(2+). Serine 517 (proton acceptor) is an active-site residue.

This sequence belongs to the IlvD/Edd family. Homodimer. The cofactor is [2Fe-2S] cluster. Mg(2+) is required as a cofactor.

It carries out the reaction (2R)-2,3-dihydroxy-3-methylbutanoate = 3-methyl-2-oxobutanoate + H2O. The enzyme catalyses (2R,3R)-2,3-dihydroxy-3-methylpentanoate = (S)-3-methyl-2-oxopentanoate + H2O. It participates in amino-acid biosynthesis; L-isoleucine biosynthesis; L-isoleucine from 2-oxobutanoate: step 3/4. The protein operates within amino-acid biosynthesis; L-valine biosynthesis; L-valine from pyruvate: step 3/4. Its function is as follows. Functions in the biosynthesis of branched-chain amino acids. Catalyzes the dehydration of (2R,3R)-2,3-dihydroxy-3-methylpentanoate (2,3-dihydroxy-3-methylvalerate) into 2-oxo-3-methylpentanoate (2-oxo-3-methylvalerate) and of (2R)-2,3-dihydroxy-3-methylbutanoate (2,3-dihydroxyisovalerate) into 2-oxo-3-methylbutanoate (2-oxoisovalerate), the penultimate precursor to L-isoleucine and L-valine, respectively. This chain is Dihydroxy-acid dehydratase, found in Salmonella typhi.